Here is a 461-residue protein sequence, read N- to C-terminus: UDP-glucose 6-dehydrogenase TuaD (461 aa).

NAD(+)-binding positions include 3–20, Val-12, Asp-31, Lys-36, Thr-122, and Glu-156; that span reads KIAVIGTGYVGLVSGTCF. Residues 152–156, Lys-205, Asn-209, 250–254, and Gly-258 each bind substrate; these read EFLRE and FLKAG. The active-site Nucleophile is the Cys-261. Residue Lys-264 coordinates NAD(+). Position 321 (Lys-321) interacts with substrate. Arg-328 provides a ligand contact to NAD(+).

The protein belongs to the UDP-glucose/GDP-mannose dehydrogenase family. Phosphorylated by YwqD and dephosphorylated by YwqE in vitro.

It is found in the cytoplasm. The enzyme catalyses UDP-alpha-D-glucose + 2 NAD(+) + H2O = UDP-alpha-D-glucuronate + 2 NADH + 3 H(+). It functions in the pathway nucleotide-sugar biosynthesis; UDP-alpha-D-glucuronate biosynthesis; UDP-alpha-D-glucuronate from UDP-alpha-D-glucose: step 1/1. With respect to regulation, activated by phosphorylation; inhibited by dephosphorylation. Catalyzes the conversion of UDP-glucose into UDP-glucuronate, one of the precursors of teichuronic acid. This is UDP-glucose 6-dehydrogenase TuaD (tuaD) from Bacillus subtilis (strain 168).